Here is a 499-residue protein sequence, read N- to C-terminus: Trichothecene C-4 hydroxylase (499 aa).

Residues 7–29 (VGVAVQLVLTVLLASIPLRVIWN) form a helical membrane-spanning segment. N-linked (GlcNAc...) asparagine glycans are attached at residues Asn-173 and Asn-287. Heme is bound at residue Cys-442. Asn-473 is a glycosylation site (N-linked (GlcNAc...) asparagine).

The protein belongs to the cytochrome P450 family. Heme serves as cofactor.

Its subcellular location is the membrane. The protein operates within sesquiterpene biosynthesis; trichothecene biosynthesis. Its function is as follows. Trichothecene C-4 hydroxylase; part of the gene cluster that mediates the production of the antimicrobial trichothecene harzianum A (HA) that plays a role in Botrytis cinerea antagonistic activity and plant defense priming. The biosynthesis of harzianum A begins with the cyclization of farnesyl diphosphate to trichodiene and is catalyzed by the trichodiene synthase TRI5. Trichodiene undergoes a series of oxygenations catalyzed by the cytochrome P450 monooxygenase TRI4. TRI4 controls the addition of 3 oxygens at C-2, C-11, and the C-12, C-13-epoxide to form the intermediate isotrichodiol. Isotrichodiol then undergoes a non-enzymatic isomerization and cyclization to form 12,13-epoxytrichothec-9-ene (EPT) which is further converted to trichodermol by the cytochrome P450 monooxygenase TRI11 via C-4 hydroxylation. The last step of HA synthesis is esterification of an octatriendioyl moiety to the C-4 oxygen of trichodermol. The octatriendioyl moiety is probably produced by the polyketide synthase TRI17 and the esterification performed by the trichothecene O-acetyltransferase TRI3. In Trichoderma arundinaceum, this protein is Trichothecene C-4 hydroxylase.